Reading from the N-terminus, the 160-residue chain is Dysbindin domain-containing protein 1 (160 aa).

Disordered stretches follow at residues 1-34 and 95-160; these read MESPEGAGPGEITKEVKVPQAAPSVPAHETGDTC and ADSD…PKED. Phosphoserine occurs at positions 3, 97, and 121. The span at 127 to 143 shows a compositional bias: basic and acidic residues; it reads TRAEQNREKQTPSDPER.

The protein belongs to the dysbindin family.

The chain is Dysbindin domain-containing protein 1 (Dbndd1) from Rattus norvegicus (Rat).